The sequence spans 276 residues: Elongation factor Ts, mitochondrial (276 aa).

The protein belongs to the EF-Ts family.

The protein localises to the mitochondrion. Associates with the EF-Tu.GDP complex and induces the exchange of GDP to GTP. It remains bound to the aminoacyl-tRNA.EF-Tu.GTP complex up to the GTP hydrolysis stage on the ribosome. The sequence is that of Elongation factor Ts, mitochondrial from Leishmania braziliensis.